An 87-amino-acid chain; its full sequence is Small ribosomal subunit protein bS20 (87 aa).

A disordered region spans residues 1-26 (MANIKSAKKRAVQSEKARKHNASRRS).

Belongs to the bacterial ribosomal protein bS20 family.

Its function is as follows. Binds directly to 16S ribosomal RNA. This Salmonella gallinarum (strain 287/91 / NCTC 13346) protein is Small ribosomal subunit protein bS20.